A 308-amino-acid chain; its full sequence is C-4 methylsterol oxidase (308 aa).

The chain crosses the membrane as a helical span at residues 56–76; it reads LLFFLTHEIFYFGRCLPWAII. Residues 145-282 enclose the Fatty acid hydroxylase domain; that stretch reads WAVFFVLEDT…FRWWDFILDT (138 aa). Positions 160–164 match the Histidine box-1 motif; that stretch reads HRGLH. The Histidine box-2 motif lies at 173–177; that stretch reads HKQHH. The Histidine box-3 motif lies at 257–263; the sequence is HHDEHHH.

Belongs to the sterol desaturase family. Requires Fe cation as cofactor.

The protein localises to the endoplasmic reticulum membrane. The catalysed reaction is 4,4-dimethyl-5alpha-cholest-7-en-3beta-ol + 6 Fe(II)-[cytochrome b5] + 3 O2 + 5 H(+) = 4alpha-carboxy-4beta-methyl-5alpha-cholest-7-ene-3beta-ol + 6 Fe(III)-[cytochrome b5] + 4 H2O. The protein operates within steroid biosynthesis; zymosterol biosynthesis; zymosterol from lanosterol: step 3/6. Functionally, C-4 methylsterol oxidase; part of the third module of ergosterol biosynthesis pathway that includes the late steps of the pathway. ERG25 is a catalytic component of the C-4 demethylation complex that catalyzes the conversion of 4,4-dimethylfecosterol into fecosterol via 4-methylfecosterol. Catalyzes the three-step monooxygenation required for the demethylation of 4,4-dimethyl and 4alpha-methylsterols. The third module or late pathway involves the ergosterol synthesis itself through consecutive reactions that mainly occur in the endoplasmic reticulum (ER) membrane. Firstly, the squalene synthase ERG9 catalyzes the condensation of 2 farnesyl pyrophosphate moieties to form squalene, which is the precursor of all steroids. Squalene synthase is crucial for balancing the incorporation of farnesyl diphosphate (FPP) into sterol and nonsterol isoprene synthesis. Secondly, the squalene epoxidase ERG1 catalyzes the stereospecific oxidation of squalene to (S)-2,3-epoxysqualene, which is considered to be a rate-limiting enzyme in steroid biosynthesis. Then, the lanosterol synthase ERG7 catalyzes the cyclization of (S)-2,3 oxidosqualene to lanosterol, a reaction that forms the sterol core. In the next steps, lanosterol is transformed to zymosterol through a complex process involving various demethylation, reduction and desaturation reactions. The lanosterol 14-alpha-demethylase ERG11 (also known as CYP51) catalyzes C14-demethylation of lanosterol to produce 4,4'-dimethyl cholesta-8,14,24-triene-3-beta-ol, which is critical for ergosterol biosynthesis. The C-14 reductase ERG24 reduces the C14=C15 double bond of 4,4-dimethyl-cholesta-8,14,24-trienol to produce 4,4-dimethyl-cholesta-8,24-dienol. 4,4-dimethyl-cholesta-8,24-dienol is substrate of the C-4 demethylation complex ERG25-ERG26-ERG27 in which ERG25 catalyzes the three-step monooxygenation required for the demethylation of 4,4-dimethyl and 4alpha-methylsterols, ERG26 catalyzes the oxidative decarboxylation that results in a reduction of the 3-beta-hydroxy group at the C-3 carbon to an oxo group, and ERG27 is responsible for the reduction of the keto group on the C-3. ERG28 has a role as a scaffold to help anchor ERG25, ERG26 and ERG27 to the endoplasmic reticulum and ERG29 regulates the activity of the iron-containing C4-methylsterol oxidase ERG25. Then, the sterol 24-C-methyltransferase ERG6 catalyzes the methyl transfer from S-adenosyl-methionine to the C-24 of zymosterol to form fecosterol. The C-8 sterol isomerase ERG2 catalyzes the reaction which results in unsaturation at C-7 in the B ring of sterols and thus converts fecosterol to episterol. The sterol-C5-desaturase ERG3 then catalyzes the introduction of a C-5 double bond in the B ring to produce 5-dehydroepisterol. The C-22 sterol desaturase ERG5 further converts 5-dehydroepisterol into ergosta-5,7,22,24(28)-tetraen-3beta-ol by forming the C-22(23) double bond in the sterol side chain. Finally, ergosta-5,7,22,24(28)-tetraen-3beta-ol is substrate of the C-24(28) sterol reductase ERG4 to produce ergosterol. This is C-4 methylsterol oxidase from Candida albicans (strain SC5314 / ATCC MYA-2876) (Yeast).